The primary structure comprises 602 residues: Putative pentatricopeptide repeat-containing protein At1g12700, mitochondrial (602 aa).

A mitochondrion-targeting transit peptide spans Met1 to Phe95. PPR repeat units lie at residues Ser87 to His121, Asn122 to Pro156, Asp157 to Pro191, Asp192 to Ala226, Asp227 to Ser261, Ser262 to Pro296, Asn297 to Pro331, Asn332 to Pro366, Asp367 to Ala401, Asn402 to Pro436, Asp437 to Leu471, Gly472 to Pro506, Asn507 to Pro541, and Asn542 to Ala576.

It belongs to the PPR family. P subfamily.

It localises to the mitochondrion. The chain is Putative pentatricopeptide repeat-containing protein At1g12700, mitochondrial from Arabidopsis thaliana (Mouse-ear cress).